We begin with the raw amino-acid sequence, 40 residues long: IVGGNEVTPHAYPWQVGLFIDDMYFCGGSISVTLTGWGKP.

The Peptidase S1 domain occupies 1-40; the sequence is IVGGNEVTPHAYPWQVGLFIDDMYFCGGSISVTLTGWGKP.

It belongs to the peptidase S1 family.

It localises to the secreted. It is found in the extracellular space. Its function is as follows. Serine protease with fibrinolytic activity. The sequence is that of Fibrinolytic protease from Euphausia superba (Antarctic krill).